The primary structure comprises 204 residues: Thymidylate kinase (204 aa).

11–18 contributes to the ATP binding site; sequence GLDKSGKT.

This sequence belongs to the thymidylate kinase family.

The enzyme catalyses dTMP + ATP = dTDP + ADP. The protein operates within pyrimidine metabolism; dTTP biosynthesis. In Vaccinia virus (strain Ankara) (VACV), this protein is Thymidylate kinase (TMK).